The chain runs to 825 residues: SWI/SNF complex subunit SWI3 (825 aa).

Residues 1 to 13 (MENTLGEGSTVNA) are compositionally biased toward polar residues. Residues 1–285 (MENTLGEGST…NDHSKSANPK (285 aa)) form a disordered region. Residues 22-42 (NDNNSDSNANAAVAGVANTDT) show a composition bias toward low complexity. Polar residues-rich tracts occupy residues 74–104 (TAKQQPTMQANKLDSQETPSTEESRAQNVFG) and 117–138 (TESSVSNNEANTPSIPTNPVDN). Ser-88 carries the phosphoserine modification. 2 stretches are compositionally biased toward basic and acidic residues: residues 159–169 (KNMEDVKIQKE) and 180–194 (GVKEESQPDENTKEM). Ser-185 bears the Phosphoserine mark. A compositionally biased stretch (acidic residues) spans 195 to 206 (DEVEEDDEDDDQ). Over residues 224 to 237 (KQLGNTSSVANTPS) the composition is skewed to polar residues. Position 235 is a phosphothreonine (Thr-235). The segment covering 240–280 (PDAHKAEQEDIIEKTESVDKKVDSGEERNEQEREIMNDHSK) has biased composition (basic and acidic residues). In terms of domain architecture, SWIRM spans 305–402 (IVIPSYSKWF…YQVDSKLLPK (98 aa)). Residues 464 to 509 (YDEITHPPSTTDDENGDKNDNGGKMNNEVSTSTSMTGDANLLEEGE) form a disordered region. The SANT domain occupies 522–573 (QIDENWSKEDLQKLLKGIQEFGADWYKVAKNVGNKSPEQCILRFLQLPIEDK). A Phosphoserine modification is found at Ser-657. Residues 694 to 722 (LDAKLNHLKKLEKFMELERKTLERQQENL) form a leucine-zipper region.

As to quaternary structure, interacts with RTT102, SWP82 and the N-terminus of SNF2. Component of the SWI/SNF global transcription activator complex. The 1.14 MDa SWI/SNF complex is composed of 11 different subunits: one copy each of SWI1, SNF2/SWI2, SNF5, SNF12/SWP73, ARP7/SWP61, ARP9/SWP59; two copies each of SWI3, SNF6, SNF11, SWP82; and three copies of TAF14/SWP29.

It localises to the nucleus. Functionally, involved in transcriptional activation. Component of the SWI/SNF complex, an ATP-dependent chromatin-remodeling complex, which is required for the positive and negative regulation of gene expression of a large number of genes. It changes chromatin structure by altering DNA-histone contacts within a nucleosome, leading eventually to a change in nucleosome position, thus facilitating or repressing binding of gene-specific transcription factors. The polypeptide is SWI/SNF complex subunit SWI3 (SWI3) (Saccharomyces cerevisiae (strain ATCC 204508 / S288c) (Baker's yeast)).